The chain runs to 178 residues: Endothelin-2 (178 aa).

The first 24 residues, 1 to 24 (MVSVPTAWCSVALALLVALHEGKD), serve as a signal peptide directing secretion. Residues 25–46 (QAAATLEQPASSPRARAAHLRL) constitute a propeptide that is removed on maturation. 2 disulfide bridges follow: cysteine 49–cysteine 63 and cysteine 51–cysteine 59. Residues 70-178 (VNTPGQTAPY…RTTHSRHRKR (109 aa)) constitute a propeptide that is removed on maturation. The tract at residues 96–111 (CECSSARDPACATFCH) is endothelin-like. The disordered stretch occupies residues 154–178 (KTHFAKRQQEATREPRTTHSRHRKR). The span at 160–170 (RQQEATREPRT) shows a compositional bias: basic and acidic residues.

Belongs to the endothelin/sarafotoxin family.

It localises to the secreted. Endothelins are endothelium-derived vasoconstrictor peptides. In Oryctolagus cuniculus (Rabbit), this protein is Endothelin-2 (EDN2).